The chain runs to 704 residues: Phosphoribosylformylglycinamidine synthase subunit PurL (704 aa).

The active site involves histidine 32. Tyrosine 35 provides a ligand contact to ATP. Glutamate 76 lines the Mg(2+) pocket. Residues 77-80 and arginine 99 each bind substrate; that span reads SHNH. Histidine 78 (proton acceptor) is an active-site residue. Aspartate 100 lines the Mg(2+) pocket. Glutamine 224 provides a ligand contact to substrate. Residue aspartate 252 coordinates Mg(2+). Residue 296–298 participates in substrate binding; sequence ESQ. Residues aspartate 471 and glycine 508 each coordinate ATP. Asparagine 509 is a binding site for Mg(2+). Serine 511 lines the substrate pocket.

This sequence belongs to the FGAMS family. In terms of assembly, monomer. Part of the FGAM synthase complex composed of 1 PurL, 1 PurQ and 2 PurS subunits.

The protein localises to the cytoplasm. The catalysed reaction is N(2)-formyl-N(1)-(5-phospho-beta-D-ribosyl)glycinamide + L-glutamine + ATP + H2O = 2-formamido-N(1)-(5-O-phospho-beta-D-ribosyl)acetamidine + L-glutamate + ADP + phosphate + H(+). It participates in purine metabolism; IMP biosynthesis via de novo pathway; 5-amino-1-(5-phospho-D-ribosyl)imidazole from N(2)-formyl-N(1)-(5-phospho-D-ribosyl)glycinamide: step 1/2. In terms of biological role, part of the phosphoribosylformylglycinamidine synthase complex involved in the purines biosynthetic pathway. Catalyzes the ATP-dependent conversion of formylglycinamide ribonucleotide (FGAR) and glutamine to yield formylglycinamidine ribonucleotide (FGAM) and glutamate. The FGAM synthase complex is composed of three subunits. PurQ produces an ammonia molecule by converting glutamine to glutamate. PurL transfers the ammonia molecule to FGAR to form FGAM in an ATP-dependent manner. PurS interacts with PurQ and PurL and is thought to assist in the transfer of the ammonia molecule from PurQ to PurL. In Pyrococcus furiosus (strain ATCC 43587 / DSM 3638 / JCM 8422 / Vc1), this protein is Phosphoribosylformylglycinamidine synthase subunit PurL.